Here is a 341-residue protein sequence, read N- to C-terminus: 3-keto-steroid reductase/17-beta-hydroxysteroid dehydrogenase 7 (341 aa).

The Extracellular portion of the chain corresponds to 1–229 (MRKVVLITGA…VACPGTALTN (229 aa)). 8-15 (TGASSGIG) contributes to the NAD(+) binding site. The N-linked (GlcNAc...) asparagine glycan is linked to Asn37. Ser171 contacts substrate. Asn178 is a glycosylation site (N-linked (GlcNAc...) asparagine). The active-site Proton acceptor is the Tyr193. A glycan (N-linked (GlcNAc...) asparagine) is linked at Asn229. Residues 230 to 250 (LTYGILPPFIWTLLMPAILLL) form a helical membrane-spanning segment. The Cytoplasmic portion of the chain corresponds to 251-341 (RFFANAFTLT…NQARLSGSCL (91 aa)).

It belongs to the short-chain dehydrogenases/reductases (SDR) family. ERG27 subfamily. In terms of assembly, binds to the short form of prolactin receptor. Phosphorylated. In terms of tissue distribution, highly expressed in adrenal gland, liver, lung and thymus. Expressed in breast, ovaries, pituitary gland, pregnant uterus, prostate, kidney, lymph node, small intestine, spinal cord and trachea. Weakly expressed in all other tissues tested. Expressed in eye ciliary epithelial cells and neuroendocrine cells.

The protein resides in the endoplasmic reticulum membrane. The catalysed reaction is 17beta-estradiol + NADP(+) = estrone + NADPH + H(+). It catalyses the reaction a 3beta-hydroxysteroid + NADP(+) = a 3-oxosteroid + NADPH + H(+). It carries out the reaction 3-dehydro-4alpha-methylzymosterol + NADPH + H(+) = 4alpha-methylzymosterol + NADP(+). The enzyme catalyses zymosterone + NADPH + H(+) = zymosterol + NADP(+). The catalysed reaction is 4alpha-methyl-5alpha-cholest-8-en-3-one + NADPH + H(+) = 4alpha-methyl-5alpha-cholest-8-en-3beta-ol + NADP(+). It catalyses the reaction 4alpha-methyl-5alpha-cholest-7-en-3beta-ol + NADP(+) = 4alpha-methyl-5alpha-cholest-7-en-3-one + NADPH + H(+). It carries out the reaction 5alpha-cholest-8-en-3-one + NADPH + H(+) = 5alpha-cholest-8-en-3beta-ol + NADP(+). The enzyme catalyses 5alpha-androstane-3beta,17beta-diol + NADP(+) = 17beta-hydroxy-5alpha-androstan-3-one + NADPH + H(+). The catalysed reaction is progesterone + NADPH + H(+) = 3beta-hydroxypregn-4-ene-20-one + NADP(+). It functions in the pathway steroid biosynthesis; estrogen biosynthesis. It participates in steroid biosynthesis; zymosterol biosynthesis; zymosterol from lanosterol: step 5/6. Estradiol 17-beta-dehydrogenase and dihydrotestosterone oxidoreductase activities are selectively inhibited by 4-methyl-4-aza-5alpha-androstane derivatives, such as 17beta-[(N-Heptyl)methylamino]-4-aza-5r-androstan-3-one and 17beta-(N-Decylformamido)-4-aza-5r-androstan-3-one. In terms of biological role, bifunctional enzyme involved in steroid-hormone metabolism and cholesterol biosynthesis. Catalyzes the NADP(H)-dependent reduction of estrogens and androgens and regulates the biological potency of these steroids. Converts estrone (E1) to a more potent estrogen, 17beta-estradiol (E2). Converts dihydrotestosterone (DHT) to its inactive form 5a-androstane-3b,17b-diol. Converts moderately progesterone to 3beta-hydroxypregn-4-ene-20-one, leading to its inactivation. Additionally, participates in the post-squalene cholesterol biosynthesis, as a 3-ketosteroid reductase. Functionally, does not have enzymatic activities toward E1 and DHT. The chain is 3-keto-steroid reductase/17-beta-hydroxysteroid dehydrogenase 7 (HSD17B7) from Homo sapiens (Human).